A 214-amino-acid polypeptide reads, in one-letter code: Intermembrane phospholipid transport system binding protein MlaC (214 aa).

The signal sequence occupies residues 1–28 (MNLIQLKKWFTILTFVLTAFLVTRTAIA).

It belongs to the MlaC/ttg2D family.

The protein resides in the periplasm. Its function is as follows. Involved in a phospholipid transport pathway that maintains lipid asymmetry in the outer membrane by retrograde trafficking of phospholipids from the outer membrane to the inner membrane. May transfer phospholipid across the periplasmic space and deliver it to the MlaFEDB complex at the inner membrane. The chain is Intermembrane phospholipid transport system binding protein MlaC from Haemophilus influenzae (strain ATCC 51907 / DSM 11121 / KW20 / Rd).